A 371-amino-acid chain; its full sequence is Cytochrome b (371 aa).

Helical transmembrane passes span phenylalanine 25–valine 45, tryptophan 69–isoleucine 90, tryptophan 105–leucine 125, and phenylalanine 170–methionine 190. Residues histidine 75 and histidine 89 each contribute to the heme b site. Histidine 174 and histidine 188 together coordinate heme b. Histidine 193 is a binding site for a ubiquinone. 4 consecutive transmembrane segments (helical) span residues tyrosine 218 to phenylalanine 238, leucine 280 to histidine 300, isoleucine 312 to threonine 332, and phenylalanine 339 to proline 358.

This sequence belongs to the cytochrome b family. In terms of assembly, the cytochrome bc1 complex contains 3 respiratory subunits (MT-CYB, CYC1 and UQCRFS1), 2 core proteins (UQCRC1 and UQCRC2) and probably 6 low-molecular weight proteins. It depends on heme b as a cofactor.

It localises to the mitochondrion inner membrane. In terms of biological role, component of the ubiquinol-cytochrome c reductase complex (complex III or cytochrome b-c1 complex) that is part of the mitochondrial respiratory chain. The b-c1 complex mediates electron transfer from ubiquinol to cytochrome c. Contributes to the generation of a proton gradient across the mitochondrial membrane that is then used for ATP synthesis. In Eryx colubrinus loveridgei, this protein is Cytochrome b (MT-CYB).